We begin with the raw amino-acid sequence, 154 residues long: Myoglobin (154 aa).

The region spanning 2 to 148 (GLSDGEWQLV…FRKDMASNYK (147 aa)) is the Globin domain. The residue at position 4 (serine 4) is a Phosphoserine. Residue histidine 65 participates in nitrite binding. Histidine 65 is a binding site for O2. Threonine 68 is subject to Phosphothreonine. Histidine 94 is a binding site for heme b.

The protein belongs to the globin family. Monomeric.

The protein resides in the cytoplasm. It localises to the sarcoplasm. It carries out the reaction Fe(III)-heme b-[protein] + nitric oxide + H2O = Fe(II)-heme b-[protein] + nitrite + 2 H(+). It catalyses the reaction H2O2 + AH2 = A + 2 H2O. Its function is as follows. Monomeric heme protein which primary function is to store oxygen and facilitate its diffusion within muscle tissues. Reversibly binds oxygen through a pentacoordinated heme iron and enables its timely and efficient release as needed during periods of heightened demand. Depending on the oxidative conditions of tissues and cells, and in addition to its ability to bind oxygen, it also has a nitrite reductase activity whereby it regulates the production of bioactive nitric oxide. Under stress conditions, like hypoxia and anoxia, it also protects cells against reactive oxygen species thanks to its pseudoperoxidase activity. The chain is Myoglobin (MB) from Hylobates agilis (Agile gibbon).